The chain runs to 486 residues: UDP-N-acetylmuramate--L-alanine ligase (486 aa).

ATP is bound at residue 126-132 (GTHGKTT).

Belongs to the MurCDEF family.

The protein localises to the cytoplasm. It carries out the reaction UDP-N-acetyl-alpha-D-muramate + L-alanine + ATP = UDP-N-acetyl-alpha-D-muramoyl-L-alanine + ADP + phosphate + H(+). The protein operates within cell wall biogenesis; peptidoglycan biosynthesis. Its function is as follows. Cell wall formation. The chain is UDP-N-acetylmuramate--L-alanine ligase from Pectobacterium atrosepticum (strain SCRI 1043 / ATCC BAA-672) (Erwinia carotovora subsp. atroseptica).